The chain runs to 331 residues: Ketol-acid reductoisomerase (NADP(+)) (331 aa).

The KARI N-terminal Rossmann domain maps to 2–182; the sequence is ARMYYDEDAN…GGTRGGVLET (181 aa). NADP(+) is bound by residues 25-28, Ser-51, Ser-53, and 83-86; these read YGSQ and DEVQ. Residue His-108 is part of the active site. Gly-134 provides a ligand contact to NADP(+). Residues 183–328 form the KARI C-terminal knotted domain; that stretch reads TFREETETDL…KDLRAMFSWL (146 aa). The Mg(2+) site is built by Asp-191, Glu-195, Glu-227, and Glu-231. Substrate is bound at residue Ser-252.

It belongs to the ketol-acid reductoisomerase family. The cofactor is Mg(2+).

It catalyses the reaction (2R)-2,3-dihydroxy-3-methylbutanoate + NADP(+) = (2S)-2-acetolactate + NADPH + H(+). The enzyme catalyses (2R,3R)-2,3-dihydroxy-3-methylpentanoate + NADP(+) = (S)-2-ethyl-2-hydroxy-3-oxobutanoate + NADPH + H(+). The protein operates within amino-acid biosynthesis; L-isoleucine biosynthesis; L-isoleucine from 2-oxobutanoate: step 2/4. Its pathway is amino-acid biosynthesis; L-valine biosynthesis; L-valine from pyruvate: step 2/4. Its function is as follows. Involved in the biosynthesis of branched-chain amino acids (BCAA). Catalyzes an alkyl-migration followed by a ketol-acid reduction of (S)-2-acetolactate (S2AL) to yield (R)-2,3-dihydroxy-isovalerate. In the isomerase reaction, S2AL is rearranged via a Mg-dependent methyl migration to produce 3-hydroxy-3-methyl-2-ketobutyrate (HMKB). In the reductase reaction, this 2-ketoacid undergoes a metal-dependent reduction by NADPH to yield (R)-2,3-dihydroxy-isovalerate. In Nostoc sp. (strain PCC 7120 / SAG 25.82 / UTEX 2576), this protein is Ketol-acid reductoisomerase (NADP(+)).